Here is a 97-residue protein sequence, read N- to C-terminus: MALTKAEVAEHLFEKVGLSKRDAKDMVEIFFEEIRETLESGDQVKLSGFGNFDLRLKSERPGRNPKTGEDIPISARKVVTFRPGQKLKSRVEDGNSD.

It belongs to the bacterial histone-like protein family. Heterodimer of an alpha and a beta chain.

Its function is as follows. This protein is one of the two subunits of integration host factor, a specific DNA-binding protein that functions in genetic recombination as well as in transcriptional and translational control. The polypeptide is Integration host factor subunit alpha (Colwellia psychrerythraea (strain 34H / ATCC BAA-681) (Vibrio psychroerythus)).